Consider the following 196-residue polypeptide: Pyridoxine/pyridoxamine 5'-phosphate oxidase (196 aa).

Residues 44–49, 59–60, arginine 65, lysine 66, and glutamine 88 each bind FMN; these read RTVLLK and YT. Residue lysine 49 participates in substrate binding. Tyrosine 106, arginine 110, and serine 114 together coordinate substrate. FMN-binding positions include 123 to 124 and tryptophan 169; that span reads QS. 175-177 contributes to the substrate binding site; sequence RLH. Arginine 179 contacts FMN.

It belongs to the pyridoxamine 5'-phosphate oxidase family. Homodimer. It depends on FMN as a cofactor.

It catalyses the reaction pyridoxamine 5'-phosphate + O2 + H2O = pyridoxal 5'-phosphate + H2O2 + NH4(+). It carries out the reaction pyridoxine 5'-phosphate + O2 = pyridoxal 5'-phosphate + H2O2. The protein operates within cofactor metabolism; pyridoxal 5'-phosphate salvage; pyridoxal 5'-phosphate from pyridoxamine 5'-phosphate: step 1/1. It functions in the pathway cofactor metabolism; pyridoxal 5'-phosphate salvage; pyridoxal 5'-phosphate from pyridoxine 5'-phosphate: step 1/1. Its function is as follows. Catalyzes the oxidation of either pyridoxine 5'-phosphate (PNP) or pyridoxamine 5'-phosphate (PMP) into pyridoxal 5'-phosphate (PLP). In Alkalilimnicola ehrlichii (strain ATCC BAA-1101 / DSM 17681 / MLHE-1), this protein is Pyridoxine/pyridoxamine 5'-phosphate oxidase.